A 148-amino-acid polypeptide reads, in one-letter code: Cell division protein SepF (148 aa).

It belongs to the SepF family. Homodimer. Interacts with FtsZ.

The protein localises to the cytoplasm. In terms of biological role, cell division protein that is part of the divisome complex and is recruited early to the Z-ring. Probably stimulates Z-ring formation, perhaps through the cross-linking of FtsZ protofilaments. Its function overlaps with FtsA. In Alkaliphilus metalliredigens (strain QYMF), this protein is Cell division protein SepF.